The chain runs to 92 residues: Large ribosomal subunit protein bL28 (92 aa).

This sequence belongs to the bacterial ribosomal protein bL28 family.

In Borrelia hermsii (strain HS1 / DAH), this protein is Large ribosomal subunit protein bL28.